The following is a 182-amino-acid chain: Flightin (182 aa).

The segment covering 1 to 15 (MADEEDPWGFDDGGE) has biased composition (acidic residues). Residues 1-76 (MADEEDPWGF…PPPPEDDGYR (76 aa)) form a disordered region.

In terms of processing, several forms of flightin are thought to be produced through post-translational modifications, possibly by phosphorylation. Found only in indirect flight muscles (IFM).

Its function is as follows. Possibly involved in the regulation of flight muscles contraction, possibly by modulating actin-myosin interaction. The protein is Flightin (fln) of Drosophila melanogaster (Fruit fly).